An 840-amino-acid chain; its full sequence is Aconitase AMT8 (840 aa).

258-260 (DSH) contributes to the substrate binding site. Residues Cys-450, Cys-513, and Cys-516 each contribute to the [4Fe-4S] cluster site. Substrate-binding positions include Arg-536, Arg-541, and 709 to 710 (SR).

Belongs to the aconitase/IPM isomerase family.

Its pathway is mycotoxin biosynthesis. Functionally, aconitase; part of the gene clusters that mediate the biosynthesis of AM-toxins, host-selective toxins (HSTs) causing Alternaria blotch on apple, a worldwide distributed disease. AM-toxins are cyclic depsipeptides containing the 3 residues 2-hydroxy-isovaleric acid (2-HIV), dehydroalanine, L-alanine which are common for all 3 AM-toxins I to III. The fourth precursor is L-alpha-amino-methoxyphenyl-valeric acid (L-Amv) for AM-toxin I, L-alpha-amino-phenyl-valeric acid (L-Apv) for AM-toxin II, and L-alpha-amino-hydroxyphenyl-valeric acid (L-Ahv) for AM-toxin III. AM-toxins have two target sites for affecting susceptible apple cells; they cause invagination of the plasma membrane and electrolyte loss and chloroplast disorganization. The non-ribosomal peptide synthetase AMT1 contains 4 catalytic modules and is responsible for activation of each residue in AM-toxin. The aldo-keto reductase AMT2 catalyzes the conversion of 2-keto-isovaleric acid (2-KIV) to 2-hydroxy-isovaleric acid (2-HIV), one of the precursor residues incorporated by AMT1 during AM-toxin biosynthesis, by reduction of its ketone to an alcohol. The cytochrome P450 monooxygenase AMT3 and the thioesterase AMT4 are also important for AM-toxin production, but their exact function within the AM-toxin biosynthesis are not known yet. Up to 21 proteins (including AMT1 to AMT4) are predicted to be involved in AM-toxin biosynthesis since their expression ishighly up-regulated in AM-toxin-producing cultures. The polypeptide is Aconitase AMT8 (Alternaria alternata (Alternaria rot fungus)).